The sequence spans 552 residues: Cleavage and polyadenylation specificity factor subunit 6 (552 aa).

The interval Met1–Gly213 is necessary for interaction with NXF1. One can recognise an RRM domain in the interval Ile81–Lys161. The segment at Ile81 to Lys161 is necessary for interaction with NUDT21/CPSF5. The segment at Ile81 to Lys161 is necessary for nuclear paraspeckles localization. Thr157 carries the post-translational modification Phosphothreonine. The span at Met169 to Met180 shows a compositional bias: polar residues. Disordered stretches follow at residues Met169 to Glu411 and Gly479 to Arg552. The GAR motif lies at Arg202 to Arg206. Low complexity predominate over residues Phe207–Gly219. Pro residues-rich tracts occupy residues Pro220–Gly265, Gly285–Thr366, and Gly377–Pro388. Basic and acidic residues predominate over residues Pro389 to Thr404. Phosphothreonine is present on residues Thr404 and Thr407. A sufficient for nuclear speckle localization region spans residues Thr404–Arg552. Positions Ala405–Arg552 are necessary for RNA-binding. A necessary for interaction with SRSF3, SRSF7 and TRA2B/SFRS10 region spans residues Glu481–Arg552. The interval Arg491–Arg552 is arg/Ser-rich domain. The span at Arg494 to Arg504 shows a compositional bias: basic and acidic residues. Residues Ser495, Ser501, Ser512, Ser514, and Ser526 each carry the phosphoserine modification. Residues Glu505–Arg515 show a composition bias toward basic residues. The interval Lys511 to Arg552 is sufficient for nuclear targeting. The span at Asp516 to Arg552 shows a compositional bias: basic and acidic residues.

This sequence belongs to the RRM CPSF6/7 family. Component of the cleavage factor Im (CFIm) complex which is a heterotetramer composed of two subunits of NUDT21/CPSF5 and two subunits of CPSF6 or CPSF7 or a heterodimer of CPSF6 and CPSF7. The cleavage factor Im (CFIm) complex associates with the CPSF and CSTF complexes to promote the assembly of the core mRNA 3'-processing machinery. Associates with the exon junction complex (EJC). Associates with the 80S ribosome particle. Interacts (via the RRM domain) with NUDT21/CPSF5; this interaction is direct and enhances binding to RNA. Interacts (via Arg/Ser-rich domain) with FIP1L1 (preferentially via unphosphorylated form and Arg/Glu/Asp-rich domain); this interaction mediates, at least in part, the interaction between the CFIm and CPSF complexes and may be inhibited by CPSF6 hyper-phosphorylation. Interacts (via N-terminus) with NXF1; this interaction is direct. Interacts with SRSF3. Interacts with SRSF7. Interacts with SNRNP70. Interacts with TRA2B/SFRS10. Interacts with UPF1. Interacts with UPF3B. Interacts with VIRMA. Interacts (via Arg/Ser-rich domain) with TNPO3; promoting nuclear import of CPSF6 independently of its phosphorylation status. Interacts with YTHDC1. Phosphorylated. Phosphorylated in the Arg/Ser-rich domain by SRPK1, in vitro. In terms of processing, symmetrically dimethylated on arginine residues in the GAR motif by PRMT5 in a WDR77- and CLNS1A-dependent manner. Asymmetrically dimethylated on arginine residues in the GAR motif by PRMT1.

The protein resides in the nucleus. Its subcellular location is the nucleoplasm. It is found in the nucleus speckle. It localises to the cytoplasm. Its function is as follows. Component of the cleavage factor Im (CFIm) complex that functions as an activator of the pre-mRNA 3'-end cleavage and polyadenylation processing required for the maturation of pre-mRNA into functional mRNAs. CFIm contributes to the recruitment of multiprotein complexes on specific sequences on the pre-mRNA 3'-end, so called cleavage and polyadenylation signals (pA signals). Most pre-mRNAs contain multiple pA signals, resulting in alternative cleavage and polyadenylation (APA) producing mRNAs with variable 3'-end formation. The CFIm complex acts as a key regulator of cleavage and polyadenylation site choice during APA through its binding to 5'-UGUA-3' elements localized in the 3'-untranslated region (UTR) for a huge number of pre-mRNAs. CPSF6 enhances NUDT21/CPSF5 binding to 5'-UGUA-3' elements localized upstream of pA signals and promotes RNA looping, and hence activates directly the mRNA 3'-processing machinery. Plays a role in mRNA export. The polypeptide is Cleavage and polyadenylation specificity factor subunit 6 (Pongo abelii (Sumatran orangutan)).